Reading from the N-terminus, the 353-residue chain is Methionine import ATP-binding protein MetN (353 aa).

The ABC transporter domain occupies 8–249 (LDQIDVTFHQ…PKQPLTQDFI (242 aa)). Position 42–49 (42–49 (GYSGAGKS)) interacts with ATP.

This sequence belongs to the ABC transporter superfamily. Methionine importer (TC 3.A.1.24) family. As to quaternary structure, the complex is composed of two ATP-binding proteins (MetN), two transmembrane proteins (MetI) and a solute-binding protein (MetQ).

The protein localises to the cell membrane. It carries out the reaction L-methionine(out) + ATP + H2O = L-methionine(in) + ADP + phosphate + H(+). The enzyme catalyses D-methionine(out) + ATP + H2O = D-methionine(in) + ADP + phosphate + H(+). Part of the ABC transporter complex MetNIQ involved in methionine import. Responsible for energy coupling to the transport system. The chain is Methionine import ATP-binding protein MetN from Streptococcus pneumoniae serotype 4 (strain ATCC BAA-334 / TIGR4).